A 490-amino-acid chain; its full sequence is 2-succinylbenzoate--CoA ligase (490 aa).

This sequence belongs to the ATP-dependent AMP-binding enzyme family. MenE subfamily.

The enzyme catalyses 2-succinylbenzoate + ATP + CoA = 2-succinylbenzoyl-CoA + AMP + diphosphate. It participates in quinol/quinone metabolism; 1,4-dihydroxy-2-naphthoate biosynthesis; 1,4-dihydroxy-2-naphthoate from chorismate: step 5/7. The protein operates within quinol/quinone metabolism; menaquinone biosynthesis. Its function is as follows. Converts 2-succinylbenzoate (OSB) to 2-succinylbenzoyl-CoA (OSB-CoA). The protein is 2-succinylbenzoate--CoA ligase of Geobacillus kaustophilus (strain HTA426).